The primary structure comprises 110 residues: U1-lycotoxin-Ls1bb (110 aa).

Positions 1-20 are cleaved as a signal peptide; that stretch reads MKFVLLFGVLLVTLFSYSSA. The propeptide occupies 21-44; the sequence is EMLDDFDQADEDELLSLIEKEEAR. 4 disulfide bridges follow: cysteine 47/cysteine 62, cysteine 54/cysteine 71, cysteine 61/cysteine 89, and cysteine 73/cysteine 87.

It belongs to the neurotoxin 19 (CSTX) family. 03 subfamily. Expressed by the venom gland.

It is found in the secreted. This is U1-lycotoxin-Ls1bb from Lycosa singoriensis (Wolf spider).